Consider the following 217-residue polypeptide: Pyridoxine/pyridoxamine 5'-phosphate oxidase (217 aa).

Residues 13–16 and K71 contribute to the substrate site; that span reads RREY. FMN-binding positions include 66–71, 81–82, R87, K88, and Q110; these read RIVLLK and YT. Positions 128, 132, and 136 each coordinate substrate. FMN is bound by residues 145–146 and W190; that span reads QS. Residue 196–198 coordinates substrate; it reads RLH. FMN is bound at residue R200.

The protein belongs to the pyridoxamine 5'-phosphate oxidase family. As to quaternary structure, homodimer. FMN is required as a cofactor.

It carries out the reaction pyridoxamine 5'-phosphate + O2 + H2O = pyridoxal 5'-phosphate + H2O2 + NH4(+). It catalyses the reaction pyridoxine 5'-phosphate + O2 = pyridoxal 5'-phosphate + H2O2. The protein operates within cofactor metabolism; pyridoxal 5'-phosphate salvage; pyridoxal 5'-phosphate from pyridoxamine 5'-phosphate: step 1/1. It functions in the pathway cofactor metabolism; pyridoxal 5'-phosphate salvage; pyridoxal 5'-phosphate from pyridoxine 5'-phosphate: step 1/1. Catalyzes the oxidation of either pyridoxine 5'-phosphate (PNP) or pyridoxamine 5'-phosphate (PMP) into pyridoxal 5'-phosphate (PLP). The protein is Pyridoxine/pyridoxamine 5'-phosphate oxidase of Proteus mirabilis (strain HI4320).